A 422-amino-acid chain; its full sequence is F-box/FBD/LRR-repeat protein At5g56420 (422 aa).

The 50-residue stretch at 5-54 (RDRLSQLPDDFLLQILSWLPTKDVLVTSLLSKRWRFLWTLVPRLNYDLRL) folds into the F-box domain. 7 LRR repeats span residues 59–85 (CPRF…NIKI), 136–163 (VLKL…HLLD), 164–189 (VKYL…VVQR), 193–212 (DNVK…SLHK), 214–238 (SQAF…DIED), 279–304 (LCLI…ELCT), and 305–330 (CAPR…KLRQ). Residues 342–391 (SWKQPALPKCLLFHLETFKWELYEGSQKQKEVATFILKHAIRLKTAIISP) form the FBD domain.

This chain is F-box/FBD/LRR-repeat protein At5g56420, found in Arabidopsis thaliana (Mouse-ear cress).